Here is a 509-residue protein sequence, read N- to C-terminus: Monofunctional riboflavin biosynthesis protein RIBA 3, chloroplastic (509 aa).

The N-terminal 43 residues, M1–K43, are a transit peptide targeting the chloroplast. The tract at residues A44–K302 is inactive DHBP synthase. Residues G125–D126 and R240–T244 contribute to the D-ribulose 5-phosphate site. Positions R303–A509 are GTP cyclohydrolase II. Residue R353–E357 participates in GTP binding. C358, C369, and C371 together coordinate Zn(2+). Residues Q374, E397–R399, and T419 contribute to the GTP site. D431 functions as the Proton acceptor; for GTP cyclohydrolase activity in the catalytic mechanism. R433 acts as the Nucleophile; for GTP cyclohydrolase activity in catalysis. The GTP site is built by T454 and K459.

In the N-terminal section; belongs to the DHBP synthase family. The protein in the C-terminal section; belongs to the GTP cyclohydrolase II family. Requires Zn(2+) as cofactor. Expressed in leaves, shoots, roots, flowers and siliques.

It localises to the plastid. The protein resides in the chloroplast. It carries out the reaction GTP + 4 H2O = 2,5-diamino-6-hydroxy-4-(5-phosphoribosylamino)-pyrimidine + formate + 2 phosphate + 3 H(+). The protein operates within cofactor biosynthesis; riboflavin biosynthesis; 5-amino-6-(D-ribitylamino)uracil from GTP: step 1/4. Functionally, involved in riboflavin biosynthesis. Catalyzes the conversion of GTP to 2,5-diamino-6-ribosylamino-4(3H)-pyrimidinone 5'-phosphate (DARP), formate and pyrophosphate. RIBA2 and RIBA3 together are not able to complement the loss of function of RIBA1. This is Monofunctional riboflavin biosynthesis protein RIBA 3, chloroplastic (RIBA3) from Arabidopsis thaliana (Mouse-ear cress).